A 1011-amino-acid chain; its full sequence is Probable beta-galactosidase E (1011 aa).

The N-terminal stretch at 1–19 (MKSLLKRLIALAAAYSVAA) is a signal peptide. Positions 92, 136, 137, 138, and 195 each coordinate substrate. Glutamate 196 (proton donor) is an active-site residue. Asparagine 202 carries N-linked (GlcNAc...) asparagine glycosylation. Tyrosine 261 is a substrate binding site. A disulfide bridge links cysteine 267 with cysteine 316. Glutamate 299 acts as the Nucleophile in catalysis. Tyrosine 365 lines the substrate pocket. 12 N-linked (GlcNAc...) asparagine glycosylation sites follow: asparagine 406, asparagine 423, asparagine 446, asparagine 455, asparagine 588, asparagine 622, asparagine 704, asparagine 745, asparagine 759, asparagine 772, asparagine 778, and asparagine 913.

Belongs to the glycosyl hydrolase 35 family.

It localises to the secreted. It catalyses the reaction Hydrolysis of terminal non-reducing beta-D-galactose residues in beta-D-galactosides.. Functionally, cleaves beta-linked terminal galactosyl residues from gangliosides, glycoproteins, and glycosaminoglycans. The sequence is that of Probable beta-galactosidase E (lacE) from Aspergillus fumigatus (strain CBS 144.89 / FGSC A1163 / CEA10) (Neosartorya fumigata).